Reading from the N-terminus, the 456-residue chain is Anthocyanidin 3-O-glucosyltransferase UFGT (456 aa).

Residue serine 18 participates in kaempferol binding. Serine 18 is a quercetin binding site. Threonine 19 is a UDP binding site. Threonine 19 contacts UDP-alpha-D-glucose. Histidine 20 and glutamine 84 together coordinate kaempferol. The active-site Proton acceptor is histidine 20. Glutamine 84 contributes to the quercetin binding site. Aspartate 119 serves as the catalytic Charge relay. UDP-alpha-D-glucose is bound at residue threonine 141. Residues histidine 150 and glutamine 188 each contribute to the kaempferol site. Quercetin contacts are provided by histidine 150 and glutamine 188. UDP-binding residues include threonine 280, serine 306, tryptophan 332, alanine 333, and histidine 350. The UDP-alpha-D-glucose site is built by threonine 280, serine 306, tryptophan 332, alanine 333, histidine 350, tryptophan 353, asparagine 354, serine 355, and glutamate 358. UDP is bound by residues asparagine 354, serine 355, and glutamate 358. Glycine 373 contributes to the quercetin binding site. UDP-alpha-D-glucose-binding residues include aspartate 374 and glutamine 375.

It belongs to the UDP-glycosyltransferase family. Detected only in berry skin.

It catalyses the reaction an anthocyanidin + UDP-alpha-D-glucose + H(+) = an anthocyanidin 3-O-beta-D-glucoside + UDP. The catalysed reaction is cyanidin + UDP-alpha-D-glucose = cyanidin 3-O-beta-D-glucoside + UDP + H(+). It carries out the reaction delphinidin + UDP-alpha-D-glucose = delphinidin 3-O-beta-D-glucoside + UDP. The enzyme catalyses peonidin + UDP-alpha-D-glucose = peonidin 3-O-beta-D-glucoside + UDP. It catalyses the reaction pelargonidin + UDP-alpha-D-glucose = pelargonidin 3-O-beta-D-glucoside + UDP. The catalysed reaction is malvidin + UDP-alpha-D-glucose = malvidin 3-O-beta-D-glucoside + UDP. It carries out the reaction a flavonol + UDP-alpha-D-glucose = a flavonol 3-O-beta-D-glucoside + UDP + H(+). It functions in the pathway pigment biosynthesis; anthocyanin biosynthesis. Its activity is regulated as follows. Inhibited by Mn(2+) and Zn(2+). Its function is as follows. In the presence of other necessary color factors, this glycosylation reaction allows the accumulation of anthocyanin pigments. Involved in the formation of red wine pigments. UDP-glucose (UDP-Glc) is the physiological sugar donor, and cyanidin is the natural acceptor in vivo. Can glucosylate the anthocyanidins delphinidin, peonidin, pelargonidin and malvidin. The flavonols quercitin and kaempferol can also be glucosylated in vitro, but with glucosylation rates 50-100 times lower than cyanidin. In vitro, can use UDP-Glc, UDP-5SGlc, UDP-Xyl, UDP-Man, UDP-Gal, UDP-GlcNAc, GDP-Glc, dTDP-Glc and dTDP-Xyl as sugar donors, but not UDP-6OMeGal, UDP-Ara, UDP-6FGal, UDP-GlcN, UDP-2FGal, UDP-5SAra, GDP-Man, GDP-Fuc, UDP-Fuc or UDP-Rha. This is Anthocyanidin 3-O-glucosyltransferase UFGT from Vitis vinifera (Grape).